Consider the following 333-residue polypeptide: Tetraacyldisaccharide 4'-kinase (333 aa).

60–67 (TVGGTGKT) contributes to the ATP binding site.

The protein belongs to the LpxK family.

It carries out the reaction a lipid A disaccharide + ATP = a lipid IVA + ADP + H(+). The protein operates within glycolipid biosynthesis; lipid IV(A) biosynthesis; lipid IV(A) from (3R)-3-hydroxytetradecanoyl-[acyl-carrier-protein] and UDP-N-acetyl-alpha-D-glucosamine: step 6/6. Its function is as follows. Transfers the gamma-phosphate of ATP to the 4'-position of a tetraacyldisaccharide 1-phosphate intermediate (termed DS-1-P) to form tetraacyldisaccharide 1,4'-bis-phosphate (lipid IVA). This is Tetraacyldisaccharide 4'-kinase from Azotobacter vinelandii (strain DJ / ATCC BAA-1303).